The following is a 372-amino-acid chain: Tribbles homolog 1 (372 aa).

2 disordered regions span residues 1–23 (MRVG…ALLF) and 52–86 (ECSS…GSAP). Residues 59-75 (YLSPPGSPCSPQPPPAA) show a composition bias toward pro residues. The region spanning 91–338 (IADYLLLPLA…APEILLHPWF (248 aa)) is the Protein kinase domain. Positions 355-360 (DQIVPE) match the COP1-binding motif.

Belongs to the protein kinase superfamily. CAMK Ser/Thr protein kinase family. Tribbles subfamily. Monomer. Interacts (via protein kinase domain) with CEBPA. Interacts with COP1. Expressed in most human tissues with the highest levels in skeletal muscle, thyroid gland, pancreas, peripheral blood leukocytes, and bone marrow.

In terms of biological role, adapter protein involved in protein degradation by interacting with COP1 ubiquitin ligase. The COP1-binding motif is masked by autoinhibitory interactions with the protein kinase domain. Serves to alter COP1 substrate specificity by directing the activity of COP1 toward CEBPA. Binds selectively the recognition sequence of CEBPA. Regulates myeloid cell differentiation by altering the expression of CEBPA in a COP1-dependent manner. Controls macrophage, eosinophil and neutrophil differentiation via the COP1-binding domain. Interacts with MAPK kinases and regulates activation of MAP kinases, but has no kinase activity. The sequence is that of Tribbles homolog 1 from Homo sapiens (Human).